A 201-amino-acid polypeptide reads, in one-letter code: uncharacterized protein (201 aa).

A helical transmembrane segment spans residues 11–31; that stretch reads IIILTIMILTIIIFTRTINGL.

The protein localises to the membrane. This is an uncharacterized protein from Acanthamoeba polyphaga mimivirus (APMV).